The chain runs to 310 residues: uncharacterized protein (310 aa).

The next 9 membrane-spanning stretches (helical) occupy residues 1 to 21 (MIYF…MFSK), 38 to 58 (FFFY…VVYT), 74 to 94 (TSYF…FFIF), 110 to 130 (YGLW…SFLF), 135 to 155 (WILY…IFFS), 194 to 214 (IFIT…IVFS), 228 to 248 (LFII…MYLF), 256 to 276 (FPIM…KILI), and 284 to 304 (IFLT…INLI).

The protein belongs to the TerC family.

It localises to the cell membrane. This is an uncharacterized protein from Buchnera aphidicola subsp. Schizaphis graminum (strain Sg).